Reading from the N-terminus, the 203-residue chain is Probable chemoreceptor glutamine deamidase CheD (203 aa).

It belongs to the CheD family.

The catalysed reaction is L-glutaminyl-[protein] + H2O = L-glutamyl-[protein] + NH4(+). Probably deamidates glutamine residues to glutamate on methyl-accepting chemotaxis receptors (MCPs), playing an important role in chemotaxis. The sequence is that of Probable chemoreceptor glutamine deamidase CheD from Janthinobacterium sp. (strain Marseille) (Minibacterium massiliensis).